We begin with the raw amino-acid sequence, 303 residues long: Pantothenate synthetase (303 aa).

30–37 (MGYLHAGH) contacts ATP. The active-site Proton donor is His-37. Gln-61 contacts (R)-pantoate. Gln-61 is a binding site for beta-alanine. Residue 147–150 (GAKD) coordinates ATP. Gln-153 is a (R)-pantoate binding site. ATP contacts are provided by residues Val-176 and 184–187 (LSSR).

Belongs to the pantothenate synthetase family. Homodimer.

It is found in the cytoplasm. It carries out the reaction (R)-pantoate + beta-alanine + ATP = (R)-pantothenate + AMP + diphosphate + H(+). It participates in cofactor biosynthesis; (R)-pantothenate biosynthesis; (R)-pantothenate from (R)-pantoate and beta-alanine: step 1/1. Catalyzes the condensation of pantoate with beta-alanine in an ATP-dependent reaction via a pantoyl-adenylate intermediate. The sequence is that of Pantothenate synthetase from Rhizobium johnstonii (strain DSM 114642 / LMG 32736 / 3841) (Rhizobium leguminosarum bv. viciae).